The sequence spans 109 residues: SIAFSRAVLAEFLATLLFVFFGLGSALNWPQAMPSVLQIAMAFGLAIGTLVQALGHVSGAHINPAVTVACLVGCHVSFLRAAFYVAAQLLGAVAGAALLHEITPPDIRR.

The Cytoplasmic portion of the chain corresponds to 1–6 (SIAFSR). A helical membrane pass occupies residues 7–27 (AVLAEFLATLLFVFFGLGSAL). Residues 28–35 (NWPQAMPS) are Extracellular-facing. A helical membrane pass occupies residues 36–54 (VLQIAMAFGLAIGTLVQAL). The Cytoplasmic portion of the chain corresponds to 55–59 (GHVSG). The discontinuously helical intramembrane region spans 60–69 (AHINPAVTVA). The short motif at 63–65 (NPA) is the NPA 1 element. Residues 70 to 80 (CLVGCHVSFLR) are Cytoplasmic-facing. A helical transmembrane segment spans residues 81–102 (AAFYVAAQLLGAVAGAALLHEI). Residues 103–109 (TPPDIRR) are Extracellular-facing.

It belongs to the MIP/aquaporin (TC 1.A.8) family. In terms of assembly, homotetramer. Post-translationally, serine phosphorylation is necessary and sufficient for expression at the apical membrane. Endocytosis is not phosphorylation-dependent. In terms of processing, N-glycosylated.

It is found in the apical cell membrane. The protein localises to the basolateral cell membrane. The protein resides in the cell membrane. Its subcellular location is the cytoplasmic vesicle membrane. It localises to the golgi apparatus. It is found in the trans-Golgi network membrane. The enzyme catalyses H2O(in) = H2O(out). It catalyses the reaction glycerol(in) = glycerol(out). Forms a water-specific channel that provides the plasma membranes of renal collecting duct with high permeability to water, thereby permitting water to move in the direction of an osmotic gradient. Plays an essential role in renal water homeostasis. Could also be permeable to glycerol. The polypeptide is Aquaporin-2 (Equus caballus (Horse)).